We begin with the raw amino-acid sequence, 287 residues long: Cell division protein ZipA (287 aa).

Residue Met-1 is a topological domain, periplasmic. Residues 2–22 (EIGLREWLIVIGIIVIAGILF) form a helical membrane-spanning segment. The Cytoplasmic portion of the chain corresponds to 23 to 287 (DGWRRMRGGK…FERRALTQKR (265 aa)). The tract at residues 70–143 (LDEHDLPSMS…APRQSVNDQP (74 aa)) is disordered.

The protein belongs to the ZipA family. In terms of assembly, interacts with FtsZ via their C-terminal domains.

It localises to the cell inner membrane. In terms of biological role, essential cell division protein that stabilizes the FtsZ protofilaments by cross-linking them and that serves as a cytoplasmic membrane anchor for the Z ring. Also required for the recruitment to the septal ring of downstream cell division proteins. This Pseudomonas fluorescens (strain SBW25) protein is Cell division protein ZipA.